A 339-amino-acid polypeptide reads, in one-letter code: O-methyltransferase 7 (339 aa).

S-adenosyl-L-methionine is bound by residues Gly186, Asp209, Ser232, Phe233, and Lys246. The Proton acceptor role is filled by His250.

The protein belongs to the class I-like SAM-binding methyltransferase superfamily. Cation-independent O-methyltransferase family. COMT subfamily.

The enzyme catalyses (3,5-dichloro-2,4,6-trihydroxyphenyl)hexan-1-one + S-adenosyl-L-methionine = 1-(3,5-dichloro-2,6-dihydroxy-4-methoxyphenyl)hexan-1-one + S-adenosyl-L-homocysteine + H(+). The sequence is that of O-methyltransferase 7 (omt7) from Dictyostelium discoideum (Social amoeba).